Reading from the N-terminus, the 1373-residue chain is Disease resistance protein RRS1 (1373 aa).

The TIR domain maps to 5–146; the sequence is EKDEEFVCIS…EIVRDVYETH (142 aa). The NB-ARC domain occupies 170-421; it reads IGIRCVGIWG…LLEGCGFFPH (252 aa). 179 to 186 serves as a coordination point for ATP; the sequence is GMPGIGKT. LRR repeat units lie at residues 498–522, 535–553, 554–575, 577–598, 621–646, 665–688, 742–766, 768–793, and 831–854; these read SEEIEGLFLDTSNLRFDLQPSAFKN, NPEVHPVINFPTGSLHSLP, NELRLLHWENYPLKSLPQNFDP, HLVEINMPYSQLQKLWGGTKNL, AENLEVIDLQGCTRLQNFPAAGRLLR, PPNIEKLHLQGTGILALPVSTVKP, LPNMANLDLNVLDLSGCSSLNSIQG, PRFLKQLYLGGTAIREVPQLPQSLEI, and PRNLKELYFAGTTLREVPQLPLSL. Residues 988–1005 carry the Nuclear localization signal motif; it reads RNFHCWAPGKVVPKVRKD. A DNA-binding region (WRKY) is located at residues 1204–1272; sequence IPAIDEGDLW…YLSEHNHPRP (69 aa). A disordered region spans residues 1300 to 1323; that stretch reads RVFQNKDEPNKPHLPSSSTPPGNA.

In terms of assembly, interacts with PopP2, a R.solanacearum type III effector.

It is found in the nucleus. Its function is as follows. Transcription factor. Interacts specifically with the W box (5'-(T)TGAC[CT]-3'), a frequently occurring elicitor-responsive cis-acting element. Also acts as a disease resistance protein involved in resistance to fungal and bacterial pathogens, including R.solanacearum, P.syringae pv. tomato and C.higginsianum. This is Disease resistance protein RRS1 from Arabidopsis thaliana (Mouse-ear cress).